Here is a 397-residue protein sequence, read N- to C-terminus: MAKEKFERNKPHVNVGTIGHVDHGKTTLTAALTRVCSEVFGSARVDFDKIDSAPEEKARGITINTAHVEYDSNIRHYAHVDCPGHADYVKNMITGAAQMDGAILVCSAADGPMPQTREHILLSRQVGVPYIVVFLNKADMVDDAELLELVEMEVRDLLSTYDFPGDDTPIIIGSALMALNGQDDNEMGTTAVKRLVETLDTYIPEPERAIDKPFLMPIEDVFSISGRGTVVTGRVERGIVRIQEEVEIVGLRDTQKTTCTGVEMFRKLLDEGRAGENCGVLLRGTKRDDVERGQVLVKPGTVKPHTKFTAEVYVLSKEEGGRHTPFFKGYRPQFYFRTTDVTGNCELPEGVEMVMPGDNIQMTVTLIKTIAMEDGLRFAIREGGRTVGAGVVAKVIE.

The 198-residue stretch at 10–207 (KPHVNVGTIG…TLDTYIPEPE (198 aa)) folds into the tr-type G domain. The tract at residues 19-26 (GHVDHGKT) is G1. Residue 19–26 (GHVDHGKT) participates in GTP binding. Thr-26 provides a ligand contact to Mg(2+). The segment at 60–64 (GITIN) is G2. The G3 stretch occupies residues 81–84 (DCPG). GTP contacts are provided by residues 81-85 (DCPGH) and 136-139 (NKAD). The G4 stretch occupies residues 136 to 139 (NKAD). Residues 174–176 (SAL) are G5.

It belongs to the TRAFAC class translation factor GTPase superfamily. Classic translation factor GTPase family. EF-Tu/EF-1A subfamily. In terms of assembly, monomer.

The protein localises to the cytoplasm. It catalyses the reaction GTP + H2O = GDP + phosphate + H(+). In terms of biological role, GTP hydrolase that promotes the GTP-dependent binding of aminoacyl-tRNA to the A-site of ribosomes during protein biosynthesis. In Pseudomonas fluorescens (strain ATCC BAA-477 / NRRL B-23932 / Pf-5), this protein is Elongation factor Tu.